The chain runs to 566 residues: MVILQQGDYVWMDLRSGQEFDVPIGAVVKLCDSGQIQVVDDEGNEHWISPQNATHIKPMHPTSVTGMMEDMIQHLGDLNEAGILRNLLIRYRDHLIYTYTGSILVAVNPYQLLSIYSPEHIRQYTNKKIGEMPPHIFAIADNCYFNMKRNSRDQCCIISGESGAGKTESTKLILQFLAAISGQHSWIEQQVLEATPILEAFGNAKTIRNDNSSRFGKYIDIHFNKRGAIEGARIEQYLLEKSRVCRQAPDERNYHVFYCMLEGMSEEQKKKLGLGQATDYNYLAMGNCITCEGREDSQEYANIRSAMKVLMFTDTENWEISKLLAAILHLGNLQYKDRTFENLDACEVLFSTALATAASLLEVNPPDLMNCLTSRTLITRGETVSTPLSREQALDVRDAFVKGIYGRLFVWIVDKINAAIYKPPSQEVKNPRRSIGLLDIFGFENFAVNSFEQLCINFANEHLQQFFVRHVFKLEQEEYDLESIDWLHIEFTDNQDALDMIANKPMNIISLIDEESKFPKGTDTTMLHKLNSQHRLNSNYIPPKYNHETQFGINHFAGVVYYESQG.

Residues 67 to 566 form the Myosin motor domain; sequence MMEDMIQHLG…AGVVYYESQG (500 aa). 160 to 167 contributes to the ATP binding site; the sequence is GESGAGKT.

Belongs to the TRAFAC class myosin-kinesin ATPase superfamily. Myosin family. In terms of assembly, might homodimerize in a two headed molecule through the formation of a coiled-coil rod. Identified in a complex with USH1C and USH1G. Interacts with MYRIP. Interacts with RPE65. Interacts with CIB2. May interact with CALM. Interacts with WHRN. Interacts with PLEKHB1 (via PH domain). Interacts with PCDH15. Interacts with TWF2. Interacts with USH1G. Interacts with MYH9. Interacts (via MyTH4-FERM domains) with cytoplasmic regions of ADGRV1 and USH2A. Interacts with PDZD7 (via MyTH4-FERM domains). Interacts with CALML4.

Its subcellular location is the cytoplasm. It is found in the cell cortex. It localises to the cytoskeleton. The protein localises to the synapse. Myosins are actin-based motor molecules with ATPase activity. Unconventional myosins serve in intracellular movements. Their highly divergent tails bind to membranous compartments, which are then moved relative to actin filaments. In the retina, plays an important role in the renewal of the outer photoreceptor disks. Plays an important role in the distribution and migration of retinal pigment epithelial (RPE) melanosomes and phagosomes, and in the regulation of opsin transport in retinal photoreceptors. In the inner ear, plays an important role in differentiation, morphogenesis and organization of cochlear hair cell bundles. Motor protein that is a part of the functional network formed by USH1C, USH1G, CDH23 and MYO7A that mediates mechanotransduction in cochlear hair cells. Required for normal hearing. Involved in hair-cell vesicle trafficking of aminoglycosides, which are known to induce ototoxicity. The chain is Unconventional myosin-VIIa (MYO7A) from Sus scrofa (Pig).